An 823-amino-acid chain; its full sequence is Leucine--tRNA ligase (823 aa).

The 'HIGH' region motif lies at 42 to 52 (PYPSGTLHMGH). The 'KMSKS' region motif lies at 575–579 (KMSKS). Lys578 serves as a coordination point for ATP.

This sequence belongs to the class-I aminoacyl-tRNA synthetase family.

The protein resides in the cytoplasm. It catalyses the reaction tRNA(Leu) + L-leucine + ATP = L-leucyl-tRNA(Leu) + AMP + diphosphate. The chain is Leucine--tRNA ligase from Legionella pneumophila (strain Paris).